The sequence spans 83 residues: Mitochondrial import inner membrane translocase subunit Tim8 (83 aa).

The Twin CX3C motif signature appears at 35 to 60 (CWDVCFSDYRPPSKMDGKTQTCIQNC). 2 cysteine pairs are disulfide-bonded: Cys35/Cys60 and Cys39/Cys56.

It belongs to the small Tim family. As to quaternary structure, heterohexamer; composed of 3 copies of ddp-1/tim-8 and 3 copies of tin-13/tim-13, named soluble 70 kDa complex. Associates with the TIM22 complex, whose core is composed of tim-22.

It localises to the mitochondrion inner membrane. Functionally, mitochondrial intermembrane chaperone that participates in the import and insertion of some multi-pass transmembrane proteins into the mitochondrial inner membrane. Also required for the transfer of beta-barrel precursors from the TOM complex to the sorting and assembly machinery (SAM complex) of the outer membrane. Acts as a chaperone-like protein that protects the hydrophobic precursors from aggregation and guide them through the mitochondrial intermembrane space. The ddp-1/tim-8-tim-13 complex mediates the import of some proteins while the predominant tim-9/tin-9.1-tim-10/tin-10 70 kDa complex mediates the import of much more proteins. The protein is Mitochondrial import inner membrane translocase subunit Tim8 of Caenorhabditis briggsae.